Reading from the N-terminus, the 275-residue chain is Expansin-A23 (275 aa).

A signal peptide spans 1-27 (MNLLGKMIYVEGFMMIMATLLVSMSYG). One can recognise an Expansin-like EG45 domain in the interval 72 to 182 (QGACGYGDLF…RRISCARTGG (111 aa)). The Expansin-like CBD domain maps to 192–271 (YFLMILPYNV…NWGFGQTFDG (80 aa)).

Belongs to the expansin family. Expansin A subfamily.

The protein localises to the secreted. It is found in the cell wall. Its subcellular location is the membrane. Functionally, causes loosening and extension of plant cell walls by disrupting non-covalent bonding between cellulose microfibrils and matrix glucans. No enzymatic activity has been found. The protein is Expansin-A23 (EXPA23) of Arabidopsis thaliana (Mouse-ear cress).